We begin with the raw amino-acid sequence, 372 residues long: DNA-directed RNA polymerase subunit alpha (372 aa).

Positions 1–268 (MIFDEDSNSI…DQFQPFINFD (268 aa)) are alpha N-terminal domain (alpha-NTD). Residues 280–372 (KDTLPYDSNL…ESLSKQYSEE (93 aa)) form an alpha C-terminal domain (alpha-CTD) region.

Belongs to the RNA polymerase alpha chain family. Homodimer. The RNAP catalytic core consists of 2 alpha, 1 beta, 1 beta' and 1 omega subunit. When a sigma factor is associated with the core the holoenzyme is formed, which can initiate transcription.

It carries out the reaction RNA(n) + a ribonucleoside 5'-triphosphate = RNA(n+1) + diphosphate. Functionally, DNA-dependent RNA polymerase catalyzes the transcription of DNA into RNA using the four ribonucleoside triphosphates as substrates. This chain is DNA-directed RNA polymerase subunit alpha, found in Ehrlichia chaffeensis (strain ATCC CRL-10679 / Arkansas).